The following is a 298-amino-acid chain: Pyridoxal 5'-phosphate synthase subunit PdxS (298 aa).

Residue D24 coordinates D-ribose 5-phosphate. K81 (schiff-base intermediate with D-ribose 5-phosphate) is an active-site residue. G153 contributes to the D-ribose 5-phosphate binding site. Residue R165 coordinates D-glyceraldehyde 3-phosphate. D-ribose 5-phosphate contacts are provided by residues G214 and 235–236; that span reads GS.

The protein belongs to the PdxS/SNZ family. In the presence of PdxT, forms a dodecamer of heterodimers.

The catalysed reaction is aldehydo-D-ribose 5-phosphate + D-glyceraldehyde 3-phosphate + L-glutamine = pyridoxal 5'-phosphate + L-glutamate + phosphate + 3 H2O + H(+). The protein operates within cofactor biosynthesis; pyridoxal 5'-phosphate biosynthesis. Its function is as follows. Catalyzes the formation of pyridoxal 5'-phosphate from ribose 5-phosphate (RBP), glyceraldehyde 3-phosphate (G3P) and ammonia. The ammonia is provided by the PdxT subunit. Can also use ribulose 5-phosphate and dihydroxyacetone phosphate as substrates, resulting from enzyme-catalyzed isomerization of RBP and G3P, respectively. In Halalkalibacterium halodurans (strain ATCC BAA-125 / DSM 18197 / FERM 7344 / JCM 9153 / C-125) (Bacillus halodurans), this protein is Pyridoxal 5'-phosphate synthase subunit PdxS.